The primary structure comprises 341 residues: UDP-glucose 4-epimerase (341 aa).

This sequence belongs to the polysaccharide synthase family.

It carries out the reaction UDP-alpha-D-glucose = UDP-alpha-D-galactose. In terms of biological role, epimerizes UDP-galactose to UDP-glucose. This is UDP-glucose 4-epimerase (capD) from Rickettsia akari (strain Hartford).